The primary structure comprises 96 residues: uncharacterized protein (96 aa).

The next 2 membrane-spanning stretches (helical) occupy residues 27 to 47 (LYTV…FFFF) and 52 to 72 (MSAG…RPTI).

The protein resides in the cell membrane. This is an uncharacterized protein from Bacillus subtilis (strain 168).